The primary structure comprises 127 residues: Holo-[acyl-carrier-protein] synthase (127 aa).

Residues D8 and E56 each coordinate Mg(2+).

This sequence belongs to the P-Pant transferase superfamily. AcpS family. Requires Mg(2+) as cofactor.

The protein resides in the cytoplasm. It catalyses the reaction apo-[ACP] + CoA = holo-[ACP] + adenosine 3',5'-bisphosphate + H(+). In terms of biological role, transfers the 4'-phosphopantetheine moiety from coenzyme A to a Ser of acyl-carrier-protein. The polypeptide is Holo-[acyl-carrier-protein] synthase (Deinococcus deserti (strain DSM 17065 / CIP 109153 / LMG 22923 / VCD115)).